We begin with the raw amino-acid sequence, 389 residues long: Chalcone synthase 1 (389 aa).

Cysteine 164 is an active-site residue.

Belongs to the thiolase-like superfamily. Chalcone/stilbene synthases family.

The enzyme catalyses (E)-4-coumaroyl-CoA + 3 malonyl-CoA + 3 H(+) = 2',4,4',6'-tetrahydroxychalcone + 3 CO2 + 4 CoA. It functions in the pathway secondary metabolite biosynthesis; flavonoid biosynthesis. In terms of biological role, the primary product of this enzyme is 4,2',4',6'-tetrahydroxychalcone (also termed naringenin-chalcone or chalcone) which can under specific conditions spontaneously isomerize into naringenin. The protein is Chalcone synthase 1 (CHS1) of Trifolium subterraneum (Subterranean clover).